Here is a 390-residue protein sequence, read N- to C-terminus: NADH-quinone oxidoreductase subunit D (390 aa).

It belongs to the complex I 49 kDa subunit family. As to quaternary structure, NDH-1 is composed of 14 different subunits. Subunits NuoB, C, D, E, F, and G constitute the peripheral sector of the complex.

It localises to the cell inner membrane. It catalyses the reaction a quinone + NADH + 5 H(+)(in) = a quinol + NAD(+) + 4 H(+)(out). Its function is as follows. NDH-1 shuttles electrons from NADH, via FMN and iron-sulfur (Fe-S) centers, to quinones in the respiratory chain. The immediate electron acceptor for the enzyme in this species is believed to be ubiquinone. Couples the redox reaction to proton translocation (for every two electrons transferred, four hydrogen ions are translocated across the cytoplasmic membrane), and thus conserves the redox energy in a proton gradient. The chain is NADH-quinone oxidoreductase subunit D from Geobacter sulfurreducens (strain ATCC 51573 / DSM 12127 / PCA).